The primary structure comprises 175 residues: Glycine-rich RNA-binding protein 1 (175 aa).

One can recognise an RRM domain in the interval 3–81 (AKVYVGNLSW…RRIRVNMANS (79 aa)). The disordered stretch occupies residues 114–175 (GQPGGFQQPG…GYGGYNGQSQ (62 aa)). A compositionally biased stretch (low complexity) spans 122 to 131 (PGGFQQQGGY). The segment covering 132–141 (PQQGGYGGYQ) has biased composition (gly residues). Residues 142-162 (QPGFQPQQGGYGAPQQGYGAP) show a composition bias toward low complexity. The segment covering 163–175 (QQGGYGGYNGQSQ) has biased composition (gly residues).

The protein belongs to the glycine-rich RNA-binding protein family. Part of large ribonucleoprotein complexes (mRNPs) containing RNA-binding proteins RRM4 and PAB1, endosome-binding protein UPA1, core scaffold protein UPA2 and associated factor GRP1.

It localises to the endosome. Its function is as follows. Component of endosomal mRNA transport that regulates polarity of the infectious hyphae by transporting a broad spectrum of cargo mRNAs from the nucleus to cell poles. The polypeptide is Glycine-rich RNA-binding protein 1 (Mycosarcoma maydis (Corn smut fungus)).